A 492-amino-acid polypeptide reads, in one-letter code: G2/mitotic-specific cyclin CYB1 (492 aa).

The tract at residues 1–176 (MPQVTKTNNE…QPEVGERSQS (176 aa)) is disordered. Polar residues predominate over residues 23–33 (QESISTIKNTT). Positions 34-58 (ISNSQHKQQTQQQISSPPQVSVTSS) are enriched in low complexity. A compositionally biased stretch (polar residues) spans 59–83 (EGVSHVNTRQYLGDVSNQYITNAKP). The span at 111–135 (ASDNNNNGSTSSSSNSSNNNNNDAN) shows a compositional bias: low complexity.

Belongs to the cyclin family. Cyclin AB subfamily.

In terms of biological role, essential for the control of the cell cycle at the G2/M (mitosis) transition. Interacts with the CDC2 protein kinase to form MPF. G2/M cyclins accumulate steadily during G2 and are abruptly destroyed at mitosis. This chain is G2/mitotic-specific cyclin CYB1 (CYB1), found in Candida albicans (Yeast).